Here is a 408-residue protein sequence, read N- to C-terminus: Photox toxin (408 aa).

The interval Asn168–Lys196 is disordered. The span at Asn184–Met193 shows a compositional bias: pro residues. The TR mART core domain occupies Pro190–Asp393. Active-site residues include Arg288, Ser318, and Glu355.

In the C-terminal section; belongs to the SpvB family.

It carries out the reaction L-arginyl-[protein] + NAD(+) = N(omega)-(ADP-D-ribosyl)-L-arginyl-[protein] + nicotinamide + H(+). Its function is as follows. Mono-ADP-ribosylates chicken skeletal alpha-actin and human non-skeletal beta- and gamma-actin. Mono-ADP-ribosylates 'Arg-177' of yeast actin, blocking its ability to polymerize. Does not possess NAD(+)-glycohydrolase activity, unlike most mART enzymes. Upon expression in S.cerevisiae almost completely inhibits growth. This is Photox toxin (phxA) from Photorhabdus laumondii subsp. laumondii (strain DSM 15139 / CIP 105565 / TT01) (Photorhabdus luminescens subsp. laumondii).